The primary structure comprises 177 residues: Large ribosomal subunit protein uL6 (177 aa).

It belongs to the universal ribosomal protein uL6 family. Part of the 50S ribosomal subunit.

Its function is as follows. This protein binds to the 23S rRNA, and is important in its secondary structure. It is located near the subunit interface in the base of the L7/L12 stalk, and near the tRNA binding site of the peptidyltransferase center. The chain is Large ribosomal subunit protein uL6 from Neisseria meningitidis serogroup B (strain ATCC BAA-335 / MC58).